A 413-amino-acid polypeptide reads, in one-letter code: Sulfoquinovose isomerase (413 aa).

6-sulfo-beta-D-quinovose contacts are provided by Arg55, Tyr111, Asn172, His176, and Arg238. The active-site Proton donor/acceptor is His248. Glu251, Gln362, Gln379, and His383 together coordinate 6-sulfo-beta-D-quinovose. Residue His383 is the Proton donor/acceptor of the active site.

It belongs to the N-acylglucosamine 2-epimerase family. In terms of assembly, homohexamer.

It catalyses the reaction 6-sulfo-beta-D-quinovose = 6-deoxy-6-sulfo-D-fructose. It carries out the reaction 6-sulfo-beta-D-quinovose = 6-sulfo-D-rhamnose. With respect to regulation, significantly inhibited by Cu(2+), Fe(3+) and Co(2+). Partially inhibited by Mg(2+), Ca(2+) and Mn(2+). Also inhibited by ATP, ADP, dATP, TTP and GTP. Its function is as follows. Catalyzes the isomerization of sulfoquinovose (SQ) to 6-deoxy-6-sulfo-D-fructose (SF). Can also catalyze the interconversion of SQ and sulforhamnose (SR). Has a clear preference for beta-SQ and little-to-no activity on alpha-SQ. In vitro, can also catalyze the interconversion of mannose, fructose and glucose, or lyxose and xylulose, but has extremely low activity with glucose. The protein is Sulfoquinovose isomerase (yihS) of Escherichia coli (strain K12).